We begin with the raw amino-acid sequence, 111 residues long: Cytochrome c (111 aa).

Alanine 1 carries the post-translational modification N-acetylalanine. The heme c site is built by cysteine 22, cysteine 25, and histidine 26. Lysine 80 is subject to N6,N6,N6-trimethyllysine. Methionine 88 is a heme c binding site. Lysine 94 carries the N6,N6,N6-trimethyllysine modification.

This sequence belongs to the cytochrome c family. Binds 1 heme c group covalently per subunit.

Its subcellular location is the mitochondrion intermembrane space. Its function is as follows. Electron carrier protein. The oxidized form of the cytochrome c heme group can accept an electron from the heme group of the cytochrome c1 subunit of cytochrome reductase. Cytochrome c then transfers this electron to the cytochrome oxidase complex, the final protein carrier in the mitochondrial electron-transport chain. The polypeptide is Cytochrome c (Cannabis sativa (Hemp)).